A 58-amino-acid chain; its full sequence is uncharacterized protein (58 aa).

A helical transmembrane segment spans residues 5–27 (FLHANITIIPHSVLYVSLSYYII).

Its subcellular location is the membrane. This is an uncharacterized protein from Saccharomyces cerevisiae (strain ATCC 204508 / S288c) (Baker's yeast).